A 130-amino-acid chain; its full sequence is Small ribosomal subunit protein uS9 (130 aa).

This sequence belongs to the universal ribosomal protein uS9 family.

The protein is Small ribosomal subunit protein uS9 of Shewanella sediminis (strain HAW-EB3).